The following is a 269-amino-acid chain: MSTLNIAVAGSSGRMGRALLEAVERAPDMRLSAALERSGSPYLGKDAGELIGSPCGIGITDNVDTALDGSQVLVDFTRPDGTLVHVDRCREKNIKMVIGTTGFSPRQKEALWIASRDIAIVLAPNMSVGVNVTLKLLETAARVLNEDYDIEIIEAHHRHKVDAPSGTALLMGEVVAKALGKELSEVAVYSREGHTGEREAGSIGFATVRGGDIVGDHTVMFAGTGERIEISHKASSRATFAEGALRAARFLADKRNGMFDMQDVLGLRQ.

NAD(+) contacts are provided by residues 10-15 (GSSGRM) and E36. R37 contributes to the NADP(+) binding site. NAD(+) contacts are provided by residues 99-101 (GTT) and 123-126 (APNM). Catalysis depends on H156, which acts as the Proton donor/acceptor. H157 contributes to the (S)-2,3,4,5-tetrahydrodipicolinate binding site. K160 serves as the catalytic Proton donor. Residue 166-167 (GT) coordinates (S)-2,3,4,5-tetrahydrodipicolinate.

The protein belongs to the DapB family.

Its subcellular location is the cytoplasm. It catalyses the reaction (S)-2,3,4,5-tetrahydrodipicolinate + NAD(+) + H2O = (2S,4S)-4-hydroxy-2,3,4,5-tetrahydrodipicolinate + NADH + H(+). It carries out the reaction (S)-2,3,4,5-tetrahydrodipicolinate + NADP(+) + H2O = (2S,4S)-4-hydroxy-2,3,4,5-tetrahydrodipicolinate + NADPH + H(+). Its pathway is amino-acid biosynthesis; L-lysine biosynthesis via DAP pathway; (S)-tetrahydrodipicolinate from L-aspartate: step 4/4. Functionally, catalyzes the conversion of 4-hydroxy-tetrahydrodipicolinate (HTPA) to tetrahydrodipicolinate. The sequence is that of 4-hydroxy-tetrahydrodipicolinate reductase from Nitrosospira multiformis (strain ATCC 25196 / NCIMB 11849 / C 71).